Consider the following 218-residue polypeptide: UPF0319 protein PM0395 (218 aa).

The first 21 residues, 1–21, serve as a signal peptide directing secretion; that stretch reads MKFRFAALASVALLTSTVSVA.

Belongs to the UPF0319 family.

This chain is UPF0319 protein PM0395, found in Pasteurella multocida (strain Pm70).